A 503-amino-acid polypeptide reads, in one-letter code: Cytochrome P450 3A12 (503 aa).

Cys-442 serves as a coordination point for heme.

Belongs to the cytochrome P450 family. Heme is required as a cofactor.

It localises to the endoplasmic reticulum membrane. The protein localises to the microsome membrane. The enzyme catalyses an organic molecule + reduced [NADPH--hemoprotein reductase] + O2 = an alcohol + oxidized [NADPH--hemoprotein reductase] + H2O + H(+). Functionally, cytochromes P450 are a group of heme-thiolate monooxygenases. In liver microsomes, this enzyme is involved in an NADPH-dependent electron transport pathway. It oxidizes a variety of structurally unrelated compounds, including steroids, fatty acids, and xenobiotics. The protein is Cytochrome P450 3A12 (CYP3A12) of Canis lupus familiaris (Dog).